The sequence spans 325 residues: Methionine import ATP-binding protein MetN 3 (325 aa).

In terms of domain architecture, ABC transporter spans 2–239 (IEVQQLCKVY…PQSALGRALL (238 aa)). Residue 36 to 43 (GRSGAGKS) coordinates ATP.

This sequence belongs to the ABC transporter superfamily. Methionine importer (TC 3.A.1.24) family. As to quaternary structure, the complex is composed of two ATP-binding proteins (MetN), two transmembrane proteins (MetI) and a solute-binding protein (MetQ).

The protein localises to the cell inner membrane. It carries out the reaction L-methionine(out) + ATP + H2O = L-methionine(in) + ADP + phosphate + H(+). The enzyme catalyses D-methionine(out) + ATP + H2O = D-methionine(in) + ADP + phosphate + H(+). Its function is as follows. Part of the ABC transporter complex MetNIQ involved in methionine import. Responsible for energy coupling to the transport system. This Pseudomonas fluorescens (strain ATCC BAA-477 / NRRL B-23932 / Pf-5) protein is Methionine import ATP-binding protein MetN 3.